The chain runs to 143 residues: Transcriptional regulator MraZ (143 aa).

SpoVT-AbrB domains are found at residues 5–47 and 76–119; these read EYKH…SLKE and ACEC…SENN.

It belongs to the MraZ family. Forms oligomers.

Its subcellular location is the cytoplasm. It localises to the nucleoid. The sequence is that of Transcriptional regulator MraZ from Caldicellulosiruptor bescii (strain ATCC BAA-1888 / DSM 6725 / KCTC 15123 / Z-1320) (Anaerocellum thermophilum).